The chain runs to 97 residues: Co-chaperonin GroES (97 aa).

The protein belongs to the GroES chaperonin family. Heptamer of 7 subunits arranged in a ring. Interacts with the chaperonin GroEL.

The protein resides in the cytoplasm. In terms of biological role, together with the chaperonin GroEL, plays an essential role in assisting protein folding. The GroEL-GroES system forms a nano-cage that allows encapsulation of the non-native substrate proteins and provides a physical environment optimized to promote and accelerate protein folding. GroES binds to the apical surface of the GroEL ring, thereby capping the opening of the GroEL channel. The sequence is that of Co-chaperonin GroES from Yersinia enterocolitica serotype O:8 / biotype 1B (strain NCTC 13174 / 8081).